The sequence spans 212 residues: Transcription factor MYB8 (212 aa).

2 HTH myb-type domains span residues 9–61 and 62–116; these read KAHM…INYL and RPDL…KRKL. 2 DNA-binding regions (H-T-H motif) span residues 37–61 and 89–112; these read WRSL…INYL and WSLI…NTHI.

The protein localises to the nucleus. Transcription activator. The protein is Transcription factor MYB8 of Arabidopsis thaliana (Mouse-ear cress).